Consider the following 427-residue polypeptide: Trigger factor (427 aa).

The PPIase FKBP-type domain maps to 163 to 248 (GDTAVIDFEG…VHEIKAKELP (86 aa)).

This sequence belongs to the FKBP-type PPIase family. Tig subfamily.

It localises to the cytoplasm. It catalyses the reaction [protein]-peptidylproline (omega=180) = [protein]-peptidylproline (omega=0). In terms of biological role, involved in protein export. Acts as a chaperone by maintaining the newly synthesized protein in an open conformation. Functions as a peptidyl-prolyl cis-trans isomerase. This Bacillus cytotoxicus (strain DSM 22905 / CIP 110041 / 391-98 / NVH 391-98) protein is Trigger factor.